The sequence spans 249 residues: Triosephosphate isomerase (249 aa).

Substrate-binding residues include asparagine 12 and lysine 14. Lysine 14 is subject to N6-acetyllysine. Residue serine 21 is modified to Phosphoserine. Tyrosine 68 carries the 3'-nitrotyrosine modification. Phosphoserine is present on serine 80. The Electrophile role is filled by histidine 96. The residue at position 106 (serine 106) is a Phosphoserine. Residue lysine 142 forms a Glycyl lysine isopeptide (Lys-Gly) (interchain with G-Cter in SUMO1) linkage. Position 149 is an N6-succinyllysine (lysine 149). Lysine 156 is subject to N6-acetyllysine; alternate. An N6-succinyllysine; alternate modification is found at lysine 156. Serine 159 bears the Phosphoserine mark. Glutamate 166 functions as the Proton acceptor in the catalytic mechanism. Threonine 173 carries the post-translational modification Phosphothreonine. At lysine 194 the chain carries N6-acetyllysine; alternate. N6-succinyllysine; alternate is present on lysine 194. The residue at position 194 (lysine 194) is an N6-methyllysine; alternate. Serine 198 is modified (phosphoserine). At tyrosine 209 the chain carries 3'-nitrotyrosine. Residue serine 212 is modified to Phosphoserine. Threonine 214 carries the post-translational modification Phosphothreonine. Serine 223 carries the post-translational modification Phosphoserine. Lysine 238 bears the N6-acetyllysine mark.

This sequence belongs to the triosephosphate isomerase family. As to quaternary structure, homodimer.

The protein localises to the cytoplasm. The enzyme catalyses D-glyceraldehyde 3-phosphate = dihydroxyacetone phosphate. It catalyses the reaction dihydroxyacetone phosphate = methylglyoxal + phosphate. Its pathway is carbohydrate degradation; glycolysis; D-glyceraldehyde 3-phosphate from glycerone phosphate: step 1/1. It participates in carbohydrate biosynthesis; gluconeogenesis. In terms of biological role, triosephosphate isomerase is an extremely efficient metabolic enzyme that catalyzes the interconversion between dihydroxyacetone phosphate (DHAP) and D-glyceraldehyde-3-phosphate (G3P) in glycolysis and gluconeogenesis. Functionally, it is also responsible for the non-negligible production of methylglyoxal a reactive cytotoxic side-product that modifies and can alter proteins, DNA and lipids. The sequence is that of Triosephosphate isomerase (TPI1) from Homo sapiens (Human).